A 1241-amino-acid polypeptide reads, in one-letter code: ATP-dependent helicase/nuclease subunit A (1241 aa).

The region spanning 12–485 (SQWTDDQWKA…IDLAKNFRSR (474 aa)) is the UvrD-like helicase ATP-binding domain. 33-40 (AAAGSGKT) contacts ATP. The 301-residue stretch at 505-805 (GEIDYDADAE…RIMTIHKSKG (301 aa)) folds into the UvrD-like helicase C-terminal domain.

Belongs to the helicase family. AddA subfamily. In terms of assembly, heterodimer of AddA and AddB/RexB. Requires Mg(2+) as cofactor.

It carries out the reaction Couples ATP hydrolysis with the unwinding of duplex DNA by translocating in the 3'-5' direction.. The enzyme catalyses ATP + H2O = ADP + phosphate + H(+). In terms of biological role, the heterodimer acts as both an ATP-dependent DNA helicase and an ATP-dependent, dual-direction single-stranded exonuclease. Recognizes the chi site generating a DNA molecule suitable for the initiation of homologous recombination. The AddA nuclease domain is required for chi fragment generation; this subunit has the helicase and 3' -&gt; 5' nuclease activities. The polypeptide is ATP-dependent helicase/nuclease subunit A (Bacillus cereus (strain Q1)).